A 326-amino-acid chain; its full sequence is tRNA dimethylallyltransferase 2 (326 aa).

14 to 21 (GPTASGKT) serves as a coordination point for ATP. 16–21 (TASGKT) is a substrate binding site. Residues 39–42 (DSMQ) are interaction with substrate tRNA.

It belongs to the IPP transferase family. Monomer. Mg(2+) serves as cofactor.

It carries out the reaction adenosine(37) in tRNA + dimethylallyl diphosphate = N(6)-dimethylallyladenosine(37) in tRNA + diphosphate. In terms of biological role, catalyzes the transfer of a dimethylallyl group onto the adenine at position 37 in tRNAs that read codons beginning with uridine, leading to the formation of N6-(dimethylallyl)adenosine (i(6)A). The protein is tRNA dimethylallyltransferase 2 of Geotalea daltonii (strain DSM 22248 / JCM 15807 / FRC-32) (Geobacter daltonii).